A 338-amino-acid chain; its full sequence is Ketol-acid reductoisomerase (NADP(+)) (338 aa).

A KARI N-terminal Rossmann domain is found at 1–181; it reads MQVYYDKDCD…GGGRTGIIET (181 aa). NADP(+) is bound by residues 24–27, arginine 47, serine 50, serine 52, and 82–85; these read YGSQ and DEFQ. Residue histidine 107 is part of the active site. An NADP(+)-binding site is contributed by glycine 133. The region spanning 182–327 is the KARI C-terminal knotted domain; it reads TFKDETETDL…EKLRGMMPWI (146 aa). Mg(2+) is bound by residues aspartate 190, glutamate 194, glutamate 226, and glutamate 230. Substrate is bound at residue serine 251.

Belongs to the ketol-acid reductoisomerase family. Mg(2+) is required as a cofactor.

It carries out the reaction (2R)-2,3-dihydroxy-3-methylbutanoate + NADP(+) = (2S)-2-acetolactate + NADPH + H(+). The catalysed reaction is (2R,3R)-2,3-dihydroxy-3-methylpentanoate + NADP(+) = (S)-2-ethyl-2-hydroxy-3-oxobutanoate + NADPH + H(+). Its pathway is amino-acid biosynthesis; L-isoleucine biosynthesis; L-isoleucine from 2-oxobutanoate: step 2/4. The protein operates within amino-acid biosynthesis; L-valine biosynthesis; L-valine from pyruvate: step 2/4. Its function is as follows. Involved in the biosynthesis of branched-chain amino acids (BCAA). Catalyzes an alkyl-migration followed by a ketol-acid reduction of (S)-2-acetolactate (S2AL) to yield (R)-2,3-dihydroxy-isovalerate. In the isomerase reaction, S2AL is rearranged via a Mg-dependent methyl migration to produce 3-hydroxy-3-methyl-2-ketobutyrate (HMKB). In the reductase reaction, this 2-ketoacid undergoes a metal-dependent reduction by NADPH to yield (R)-2,3-dihydroxy-isovalerate. This Alcanivorax borkumensis (strain ATCC 700651 / DSM 11573 / NCIMB 13689 / SK2) protein is Ketol-acid reductoisomerase (NADP(+)).